The chain runs to 352 residues: Ferrochelatase (352 aa).

Residues His-222 and Glu-303 each contribute to the Fe cation site.

It belongs to the ferrochelatase family.

It is found in the cytoplasm. It catalyses the reaction heme b + 2 H(+) = protoporphyrin IX + Fe(2+). It functions in the pathway porphyrin-containing compound metabolism; protoheme biosynthesis; protoheme from protoporphyrin-IX: step 1/1. Its function is as follows. Catalyzes the ferrous insertion into protoporphyrin IX. The protein is Ferrochelatase of Brucella canis (strain ATCC 23365 / NCTC 10854 / RM-666).